A 663-amino-acid chain; its full sequence is Cytochrome bo(3) ubiquinol oxidase subunit 1 (663 aa).

Residues 1–16 (MFGKLSLDAVPFHEPI) lie on the Periplasmic side of the membrane. Residues 17 to 35 (VMVTIAGIILGGLALVGLI) traverse the membrane as a helical segment. The Cytoplasmic segment spans residues 36–52 (TYFGKWTYLWKEWLTSV). A helical transmembrane segment spans residues 53-80 (DHKRLGIMYIIVAIVMLLRGFADAIMMR). Ubiquinone-8 contacts are provided by Arg-71 and Asp-75. Over 81–95 (SQQALASAGEAGFLP) the chain is Periplasmic. A helical membrane pass occupies residues 96–132 (PHHYDQIFTAHGVIMIFFVAMPFVIGLMNLVVPLQIG). A ubiquinone-8-binding site is contributed by His-98. His-106 is a binding site for heme b. Over 133 to 137 (ARDVA) the chain is Cytoplasmic. A helical transmembrane segment spans residues 138–161 (FPFLNNLSFWFTVVGVILVNVSLG). Topologically, residues 162–184 (VGEFAQTGWLAYPPLSGIEYSPG) are periplasmic. Residue Trp-170 participates in heme b binding. A helical transmembrane segment spans residues 185–215 (VGVDYWIWSLQLSGIGTTLTGINFFVTILKM). Residues 216–224 (RAPGMTMFK) are Cytoplasmic-facing. A helical membrane pass occupies residues 225–260 (MPVFTWASLCANVLIIASFPILTVTVALLTLDRYLG). The Periplasmic segment spans residues 261-270 (THFFTNDMGG). A helical membrane pass occupies residues 271-307 (NMMMYINLIWAWGHPEVYILILPVFGVFSEIAATFSR). Residue His-284 participates in Cu(2+) binding. Positions 284–288 (HPEVY) form a cross-link, 1'-histidyl-3'-tyrosine (His-Tyr). Residue Tyr-288 participates in Fe(II)-heme o binding. At 308 to 311 (KRLF) the chain is on the cytoplasmic side. The helical transmembrane segment at 312–326 (GYTSLVWATVCITVL) threads the bilayer. The Periplasmic segment spans residues 327-340 (SFIVWLHHFFTMGA). Cu(2+)-binding residues include His-333 and His-334. The chain crosses the membrane as a helical span at residues 341-369 (GANVNAFFGITTMIIAIPTGVKIFNWLFT). At 370 to 377 (MYQGRIVF) the chain is on the cytoplasmic side. A helical transmembrane segment spans residues 378 to 409 (HSAMLWTIGFIVTFSVGGMTGVLLAVPGADFV). The Periplasmic portion of the chain corresponds to 410–412 (LHN). Positions 411 and 419 each coordinate Fe(II)-heme o. A helical membrane pass occupies residues 413 to 445 (SLFLIAHFHNVIIGGVVFGCFAGMTYWWPKAFG). His-421 contacts heme b. Residues 446 to 448 (FKL) are Cytoplasmic-facing. The helical transmembrane segment at 449–477 (NETWGKRAFWFWIIGFFVAFMPLYALGFM) threads the bilayer. Residues 478 to 489 (GMTRRLSQQIDP) are Periplasmic-facing. Heme b is bound by residues Arg-481 and Arg-482. A helical membrane pass occupies residues 490 to 521 (QFHTMLMIAASGAVLIALGILCLVIQMYVSIR). The Cytoplasmic segment spans residues 522–587 (DRDQNRDLTG…DHYEEIHMPK (66 aa)). Residues 588–606 (NSGAGIVIAAFSTIFGFAM) traverse the membrane as a helical segment. The Periplasmic segment spans residues 607–613 (IWHIWWL). The helical transmembrane segment at 614–632 (AIVGFAGMIITWIVKSFDE) threads the bilayer. At 633–663 (DVDYYVPVAEIEKLENQHFDEITKAGLKNGN) the chain is on the cytoplasmic side.

Belongs to the heme-copper respiratory oxidase family. The cytochrome bo(3) ubiquinol oxidase complex is a heterooctamer of two A chains, two B chains, two C chains and two D chains. It depends on Cu(2+) as a cofactor. The cofactor is heme b. Fe(II)-heme o is required as a cofactor.

The protein resides in the cell inner membrane. It carries out the reaction 2 a ubiquinol + O2 + n H(+)(in) = 2 a ubiquinone + 2 H2O + n H(+)(out). In terms of biological role, cytochrome bo(3) ubiquinol oxidase is the terminal enzyme in the aerobic respiratory chain of E.coli that predominates when cells are grown at high aeration. Catalyzes the four-electron reduction of O2 to water, using a ubiquinol as a membrane soluble electron donor for molecular oxygen reduction; ubiquinol-8 is the natural substrate for E.coli. Has proton pump activity across the membrane in addition to electron transfer, pumping 2 protons/electron and generating a proton motive force. All the redox centers of this enzyme complex are located within the largest subunit, subunit I. Protons are probably pumped via D- and K- channels found in this subunit. The sequence is that of Cytochrome bo(3) ubiquinol oxidase subunit 1 (cyoB) from Escherichia coli O157:H7.